A 455-amino-acid chain; its full sequence is Bifunctional protein GlmU (455 aa).

The interval 1–232 is pyrophosphorylase; it reads MASITGALIL…DPNLLGVNDP (232 aa). UDP-N-acetyl-alpha-D-glucosamine contacts are provided by residues 10 to 13, Lys-24, Gln-75, and 80 to 81; these read LAAG and GT. Residue Asp-106 participates in Mg(2+) binding. UDP-N-acetyl-alpha-D-glucosamine contacts are provided by Gly-141, Glu-155, Asn-172, and Asn-230. Residue Asn-230 coordinates Mg(2+). The segment at 233–253 is linker; the sequence is AELIRSEALVRARIALNWIEK. Positions 254–455 are N-acetyltransferase; it reads RVLIHAPETV…QTTLPRRRNS (202 aa). UDP-N-acetyl-alpha-D-glucosamine contacts are provided by Arg-336 and Lys-354. His-366 serves as the catalytic Proton acceptor. UDP-N-acetyl-alpha-D-glucosamine-binding residues include Tyr-369 and Asn-380. Acetyl-CoA is bound by residues Ala-383, 389 to 390, Ser-408, Ala-426, and Arg-443; that span reads NY.

In the N-terminal section; belongs to the N-acetylglucosamine-1-phosphate uridyltransferase family. It in the C-terminal section; belongs to the transferase hexapeptide repeat family. In terms of assembly, homotrimer. It depends on Mg(2+) as a cofactor.

It localises to the cytoplasm. It carries out the reaction alpha-D-glucosamine 1-phosphate + acetyl-CoA = N-acetyl-alpha-D-glucosamine 1-phosphate + CoA + H(+). It catalyses the reaction N-acetyl-alpha-D-glucosamine 1-phosphate + UTP + H(+) = UDP-N-acetyl-alpha-D-glucosamine + diphosphate. Its pathway is nucleotide-sugar biosynthesis; UDP-N-acetyl-alpha-D-glucosamine biosynthesis; N-acetyl-alpha-D-glucosamine 1-phosphate from alpha-D-glucosamine 6-phosphate (route II): step 2/2. It functions in the pathway nucleotide-sugar biosynthesis; UDP-N-acetyl-alpha-D-glucosamine biosynthesis; UDP-N-acetyl-alpha-D-glucosamine from N-acetyl-alpha-D-glucosamine 1-phosphate: step 1/1. It participates in bacterial outer membrane biogenesis; LPS lipid A biosynthesis. In terms of biological role, catalyzes the last two sequential reactions in the de novo biosynthetic pathway for UDP-N-acetylglucosamine (UDP-GlcNAc). The C-terminal domain catalyzes the transfer of acetyl group from acetyl coenzyme A to glucosamine-1-phosphate (GlcN-1-P) to produce N-acetylglucosamine-1-phosphate (GlcNAc-1-P), which is converted into UDP-GlcNAc by the transfer of uridine 5-monophosphate (from uridine 5-triphosphate), a reaction catalyzed by the N-terminal domain. The protein is Bifunctional protein GlmU of Nitratidesulfovibrio vulgaris (strain DSM 19637 / Miyazaki F) (Desulfovibrio vulgaris).